Here is a 217-residue protein sequence, read N- to C-terminus: Non-structural protein NS3 (217 aa).

This sequence belongs to the orbivirus NS3 family.

Functionally, may play a role in the release of virions from infected cells. The chain is Non-structural protein NS3 (Segment-10) from African horse sickness virus 9 (AHSV-9).